The primary structure comprises 122 residues: uncharacterized protein (122 aa).

The signal sequence occupies residues 1 to 35 (MCCYVGKATKIFLCLAAALIVVGLVLGFGLAHRTW). Residues 55 to 83 (YGGGGGGGDPLPATSGAGDTPPGVPLTEP) form a disordered region.

This is an uncharacterized protein from Oryza sativa subsp. japonica (Rice).